Reading from the N-terminus, the 386-residue chain is Interleukin-13 receptor subunit alpha-2 (386 aa).

Positions 1 to 21 (MAFIHLDVGFLYTLLVCTAFG) are cleaved as a signal peptide. Over 22–338 (SMLSNAEIKV…CWKGDIWKET (317 aa)) the chain is Extracellular. 3 Fibronectin type-III domains span residues 33 to 133 (PPQD…SPQG), 138 to 234 (KIQD…LQNI), and 239 to 338 (PPDY…WKET). A disulfide bridge links Cys-64 with Cys-112. N-linked (GlcNAc...) asparagine glycosylation occurs at Asn-114. Disulfide bonds link Cys-144–Cys-154 and Cys-183–Cys-196. 2 N-linked (GlcNAc...) asparagine glycosylation sites follow: Asn-214 and Asn-298. A disulfide bond links Cys-268 and Cys-315. The WSXWS motif motif lies at 321–325 (WSEWS). The chain crosses the membrane as a helical span at residues 339-359 (LVFFLIPFAFVSIFVLVITCL). Residues 360-386 (LLYKQRALLKTIFHTKKEVFSHQDTFC) lie on the Cytoplasmic side of the membrane.

This sequence belongs to the type I cytokine receptor family. Type 5 subfamily. As to quaternary structure, interacts with IL4RA. Interacts with high affinity to interleukin-13 (IL13), but not to interleukin-4 (IL4). Cleaved by MMP8 leading to a soluble form that is also able to interact with IL13. Expressed in kidney, placenta, liver, skeletal muscle and thymus. Expression was not seen in whole blood and heart.

It localises to the cell membrane. In terms of biological role, cell surface receptor that plays a role in the regulation of IL-13-mediated responses. Functions as a decoy receptor that inhibits IL-13- and IL-4-mediated signal transduction via the JAK-STAT pathway and thereby modulates immune responses and inflammation. Serves as a functional signaling receptor for IL-13 in an alternative pathway involving AP-1 ultimately leading to the production of TGFB1. This Canis lupus familiaris (Dog) protein is Interleukin-13 receptor subunit alpha-2 (IL13RA2).